A 288-amino-acid polypeptide reads, in one-letter code: Syntaxin-1A (288 aa).

Residues 1–265 (MKDRTQELRT…KYQSKARRKK (265 aa)) are Cytoplasmic-facing. A phosphoserine mark is found at serine 14, serine 64, and serine 95. The stretch at 68-109 (DEKTKEELEELMSDIKKTANKVRSKLKSIEQSIEQEEGLNRS) forms a coiled coil. The residue at position 188 (serine 188) is a Phosphoserine; by DAPK1. Residues 192–254 (LSEIETRHSE…ERAVSDTKKA (63 aa)) enclose the t-SNARE coiled-coil homology domain. Glycyl lysine isopeptide (Lys-Gly) (interchain with G-Cter in SUMO) cross-links involve residues lysine 252, lysine 253, and lysine 256. A helical; Anchor for type IV membrane protein membrane pass occupies residues 266 to 286 (IMIIICCVIPGIVIASTVGGI). Residues 287–288 (FA) are Extracellular-facing.

The protein belongs to the syntaxin family. As to quaternary structure, part of the SNARE core complex containing SNAP25, VAMP2 and STX1A; this complex constitutes the basic catalytic machinery of the complex neurotransmitter release apparatus. The SNARE complex interacts with CPLX1. Interacts with STXBP1. The interaction with STXBP1 promotes assembly of the SNARE complex. Interacts (via C-terminus) with KCNB1 (via C-terminus); the interaction increases in a calcium-dependent manner and induces a pore-independent enhancement of exocytosis in neuroendocrine cells, chromaffin cells, pancreatic beta cells and from the soma of dorsal root ganglia (DRG) neurons. Interacts with SYTL4. Interacts with STXBP6. Interacts with PLCL1 (via C2 domain). Interacts with OTOF. Interacts with LGI3. Interacts (via the H3 domain) with SLC6A4 (via the N-terminus); this interaction regulates SLC4A6 channel conductance in thalamocortical neurons. Interacts with SYT6 and SYT8; the interaction is Ca(2+)-dependent. Interacts with VAMP8. Interacts with SNAP23. Interacts with VAPA and SYBU. Interacts with PRRT2. Interacts with SEPT8. Interacts with STXBP5L. Interacts with synaptotagmin-1/SYT1. Interacts with SEPTIN5; in the cerebellar cortex. Interacts with SEPTIN4; in the striatum. Phosphorylated by CK2. Phosphorylation at Ser-188 by DAPK1 significantly decreases its interaction with STXBP1. Post-translationally, sumoylated, sumoylation is required for regulation of synaptic vesicle endocytosis.

It localises to the cytoplasmic vesicle. The protein localises to the secretory vesicle. Its subcellular location is the synaptic vesicle membrane. The protein resides in the cell membrane. It is found in the synapse. It localises to the synaptosome. Plays an essential role in hormone and neurotransmitter calcium-dependent exocytosis and endocytosis. Part of the SNARE (Soluble NSF Attachment Receptor) complex composed of SNAP25, STX1A and VAMP2 which mediates the fusion of synaptic vesicles with the presynaptic plasma membrane. STX1A and SNAP25 are localized on the plasma membrane while VAMP2 resides in synaptic vesicles. The pairing of the three SNAREs from the N-terminal SNARE motifs to the C-terminal anchors leads to the formation of the SNARE complex, which brings membranes into close proximity and results in final fusion. Participates in the calcium-dependent regulation of acrosomal exocytosis in sperm. Also plays an important role in the exocytosis of hormones such as insulin or glucagon-like peptide 1 (GLP-1). This chain is Syntaxin-1A (STX1A), found in Pongo abelii (Sumatran orangutan).